The primary structure comprises 115 residues: Xenovulene A biosynthesis cluster protein asL2 (115 aa).

Functionally, part of the gene cluster that mediates the biosynthesis of xenovulene A, an unusual meroterpenoid that has potent inhibitory effects on the human gamma-aminobutyrate A (GABAA) benzodiazepine receptor. The first step of xenovulene A biosynthesis is the biosynthesis of 3-methylorcinaldehyde performed by the non-reducing polyketide synthase aspks1. The salicylate hydroxylase asL1 then catalyzes the oxidative dearomatization of 3-methylorcinaldehyde to yield a dearomatized hydroxycyclohexadione. The 2-oxoglutarate-dependent dioxygenase asL3 further catalyzes the oxidative ring expansion to provide the first tropolone metabolite. The cytochrome P450 monooxygenase asR2 allows the synthesis of tropolone hemiacetal. In parallel, a previously unrecognised class of terpene cyclase, asR6, produces alpha-humulene from farnesylpyrophosphate (FPP). The putative Diels-Alderase asR5 probably catalyzes the formation of the tropolone-humulene skeleton by linking humulene and the polyketide moiety. Oxidative-ring contractions catalyzed by asL4 and asL6 then processively remove carbon atoms from the polyketide to yield xenovulene A. This chain is Xenovulene A biosynthesis cluster protein asL2, found in Sarocladium schorii (Acremonium strictum (strain IMI 501407)).